We begin with the raw amino-acid sequence, 423 residues long: Myb-like protein G (423 aa).

The region spanning 36–90 is the HTH myb-type domain; that stretch reads TISKQRENWTDEEHQKFLEALTLFDRDWKKIESFVGSKTVIQIRSHAQKYFIKVQ. A DNA-binding region (H-T-H motif) is located at residues 63-86; the sequence is WKKIESFVGSKTVIQIRSHAQKYF. Disordered regions lie at residues 93–116, 177–205, and 284–372; these read NTGERIPPPRPKRKSIQPYPQKQK, QQAVTTAQSSQRNGGLPPNPSSNNGGTTL, and ISPR…LGNY. The span at 177 to 202 shows a compositional bias: low complexity; it reads QQAVTTAQSSQRNGGLPPNPSSNNGG. The span at 286–295 shows a compositional bias: polar residues; sequence PRNSTGNINV. Low complexity predominate over residues 302–354; that stretch reads NNSNNNNNNNNNNNNNNNNNNNNNNNNNNNNNNNNNNNNNNNNNNNNNNNNNN. Positions 361–372 are enriched in polar residues; the sequence is QNHSNMVNLGNY.

It localises to the nucleus. The chain is Myb-like protein G (mybG) from Dictyostelium discoideum (Social amoeba).